Reading from the N-terminus, the 509-residue chain is Lengsin (509 aa).

The interval methionine 1–lysine 34 is disordered. The GS beta-grasp domain occupies asparagine 83–glycine 177. Residues proline 184–isoleucine 509 enclose the GS catalytic domain.

It belongs to the glutamine synthetase family. Dodecamer. Interacts with BFSP2 and VIM. In terms of tissue distribution, abundantly expressed in lens.

Its function is as follows. May act as a component of the cytoskeleton or as a chaperone for the reorganization of intermediate filament proteins during terminal differentiation in the lens. Does not seem to have enzymatic activity. The chain is Lengsin (LGSN) from Homo sapiens (Human).